Reading from the N-terminus, the 427-residue chain is Glutamate-1-semialdehyde 2,1-aminomutase (427 aa).

Lys265 carries the N6-(pyridoxal phosphate)lysine modification.

Belongs to the class-III pyridoxal-phosphate-dependent aminotransferase family. HemL subfamily. As to quaternary structure, homodimer. Requires pyridoxal 5'-phosphate as cofactor.

The protein resides in the cytoplasm. The catalysed reaction is (S)-4-amino-5-oxopentanoate = 5-aminolevulinate. It participates in porphyrin-containing compound metabolism; protoporphyrin-IX biosynthesis; 5-aminolevulinate from L-glutamyl-tRNA(Glu): step 2/2. In Burkholderia pseudomallei (strain 1710b), this protein is Glutamate-1-semialdehyde 2,1-aminomutase.